The chain runs to 393 residues: Methylthioribose kinase (393 aa).

Residues Asn38, Lys53, and 107-109 (EDL) contribute to the ATP site. Position 225 (Asp225) interacts with substrate. 242–244 (DPE) contributes to the ATP binding site. Arg332 is a binding site for substrate.

Belongs to the methylthioribose kinase family. Homodimer.

The enzyme catalyses 5-(methylsulfanyl)-D-ribose + ATP = 5-(methylsulfanyl)-alpha-D-ribose 1-phosphate + ADP + H(+). The protein operates within amino-acid biosynthesis; L-methionine biosynthesis via salvage pathway; S-methyl-5-thio-alpha-D-ribose 1-phosphate from S-methyl-5'-thioadenosine (hydrolase route): step 2/2. Its function is as follows. Catalyzes the phosphorylation of methylthioribose into methylthioribose-1-phosphate. The protein is Methylthioribose kinase of Bacillus cereus (strain G9842).